The primary structure comprises 245 residues: Probable phosphatase ECA2529 (245 aa).

Zn(2+)-binding residues include histidine 7, histidine 9, histidine 15, histidine 40, glutamate 73, histidine 101, histidine 131, aspartate 192, and histidine 194.

It belongs to the PHP family. As to quaternary structure, homotrimer. Requires Zn(2+) as cofactor.

The protein is Probable phosphatase ECA2529 of Pectobacterium atrosepticum (strain SCRI 1043 / ATCC BAA-672) (Erwinia carotovora subsp. atroseptica).